Here is a 499-residue protein sequence, read N- to C-terminus: Probable cytosol aminopeptidase (499 aa).

Lys263 and Asp268 together coordinate Mn(2+). Lys275 is an active-site residue. 3 residues coordinate Mn(2+): Asp286, Asp345, and Glu347. Arg349 is an active-site residue.

It belongs to the peptidase M17 family. The cofactor is Mn(2+).

The protein localises to the cytoplasm. It catalyses the reaction Release of an N-terminal amino acid, Xaa-|-Yaa-, in which Xaa is preferably Leu, but may be other amino acids including Pro although not Arg or Lys, and Yaa may be Pro. Amino acid amides and methyl esters are also readily hydrolyzed, but rates on arylamides are exceedingly low.. It carries out the reaction Release of an N-terminal amino acid, preferentially leucine, but not glutamic or aspartic acids.. In terms of biological role, presumably involved in the processing and regular turnover of intracellular proteins. Catalyzes the removal of unsubstituted N-terminal amino acids from various peptides. The sequence is that of Probable cytosol aminopeptidase (pepA) from Chlamydia trachomatis serovar D (strain ATCC VR-885 / DSM 19411 / UW-3/Cx).